We begin with the raw amino-acid sequence, 463 residues long: ATP-dependent protease ATPase subunit HslU (463 aa).

Residues Val21, 63–68 (GVGKTE), Asp276, Glu341, and Arg413 contribute to the ATP site.

The protein belongs to the ClpX chaperone family. HslU subfamily. As to quaternary structure, a double ring-shaped homohexamer of HslV is capped on each side by a ring-shaped HslU homohexamer. The assembly of the HslU/HslV complex is dependent on binding of ATP.

The protein localises to the cytoplasm. In terms of biological role, ATPase subunit of a proteasome-like degradation complex; this subunit has chaperone activity. The binding of ATP and its subsequent hydrolysis by HslU are essential for unfolding of protein substrates subsequently hydrolyzed by HslV. HslU recognizes the N-terminal part of its protein substrates and unfolds these before they are guided to HslV for hydrolysis. This is ATP-dependent protease ATPase subunit HslU from Thermotoga neapolitana (strain ATCC 49049 / DSM 4359 / NBRC 107923 / NS-E).